Reading from the N-terminus, the 622-residue chain is uncharacterized protein (622 aa).

[4Fe-4S] cluster is bound by residues C302, C306, C310, and C521.

It belongs to the AOR/FOR family. It depends on [4Fe-4S] cluster as a cofactor.

This is an uncharacterized protein from Methanocaldococcus jannaschii (strain ATCC 43067 / DSM 2661 / JAL-1 / JCM 10045 / NBRC 100440) (Methanococcus jannaschii).